The following is a 526-amino-acid chain: Cytochrome P450 monooxygeanse terK (526 aa).

Residues 21 to 43 (NWGQLTGALLFLAACTWIYLPAF) traverse the membrane as a helical segment. C465 contacts heme.

This sequence belongs to the cytochrome P450 family. Heme is required as a cofactor.

The protein resides in the membrane. It functions in the pathway secondary metabolite biosynthesis. Functionally, cytochrome P450 monooxygeanse; part of the gene cluster that mediates the biosynthesis of terpendoles, indole-diterpene (IDT) mycotoxins including terpendole I, terpendole K, terpendole C, as well as the kinesin Eg5 inhibitor terpendole E. Terpendoles biosynthesis begins with the synthesis of geranylgeranyl diphosphate (GGPP) by a yet unidentified GGPP synthase. Condensation of indole-3-glycerol phosphate with GGPP by the prenyltransferase terC then forms 3-geranylgeranylindole (3-GGI), followed by epoxidation and cyclization of this intermediate (by the FAD-dependent monooxygeanse terM and the terpene cyclase terB) to form paspaline. The cytochrome monooxygenase terQ then hydroxylates paspalline at C-11 to yield terpendole E. The cytochrome monooxygenase terP converts terpendole E to 13-desoxyterpendole I, and terQ converts 13-desoxyterpendole I into terpendole I. TerF and terK are required for conversion of terpendole I to terpendole C which is further converted to terpendole K. The chain is Cytochrome P450 monooxygeanse terK from Tolypocladium album (Soil fungus).